The following is a 159-amino-acid chain: TDQQAEARSYLSEEMIAEFKAAFDMFDADGGGDISVKELGTVMRMLGQTPTKEELDAIIEEVDEDGSGTIDFEEFLVMMVRQMKEDAKGKSEEELAECFRIFDRNMDGYIDAEELAEIFRASGEHVTDEEIESIMKDGDKNNDGRIDFDEFLKMMEGVQ.

Threonine 1 is modified (N-acetylthreonine). 4 EF-hand domains span residues 14–49, 50–85, 90–125, and 126–159; these read EMIAEFKAAFDMFDADGGGDISVKELGTVMRMLGQT, PTKEELDAIIEEVDEDGSGTIDFEEFLVMMVRQMKE, KSEEELAECFRIFDRNMDGYIDAEELAEIFRASGEH, and VTDEEIESIMKDGDKNNDGRIDFDEFLKMMEGVQ. Positions 27, 29, 33, 38, 63, 65, 67, 69, 74, 103, 105, 107, 109, 114, 139, 141, 143, 145, and 150 each coordinate Ca(2+).

The protein belongs to the troponin C family.

Its function is as follows. Troponin is the central regulatory protein of striated muscle contraction. Tn consists of three components: Tn-I which is the inhibitor of actomyosin ATPase, Tn-T which contains the binding site for tropomyosin and Tn-C. The binding of calcium to Tn-C abolishes the inhibitory action of Tn on actin filaments. The protein is Troponin C, skeletal muscle (TNNC2) of Sus scrofa (Pig).